A 64-amino-acid polypeptide reads, in one-letter code: MKQKTHKGTAKRIKVTGSGKLRRERAYRRHLLEGKPSTRTRRLKGTTDVSAADNKRMKRLLGKA.

Residues 1–20 (MKQKTHKGTAKRIKVTGSGK) are disordered.

Belongs to the bacterial ribosomal protein bL35 family.

In Corynebacterium urealyticum (strain ATCC 43042 / DSM 7109), this protein is Large ribosomal subunit protein bL35.